A 245-amino-acid polypeptide reads, in one-letter code: tRNA pseudouridine synthase A 2 (245 aa).

The active-site Nucleophile is the D53. Y111 is a substrate binding site.

It belongs to the tRNA pseudouridine synthase TruA family. In terms of assembly, homodimer.

It catalyses the reaction uridine(38/39/40) in tRNA = pseudouridine(38/39/40) in tRNA. In terms of biological role, formation of pseudouridine at positions 38, 39 and 40 in the anticodon stem and loop of transfer RNAs. The chain is tRNA pseudouridine synthase A 2 from Bacillus cereus (strain ATCC 10987 / NRS 248).